We begin with the raw amino-acid sequence, 362 residues long: Chorismate synthase (362 aa).

Arginine 47 lines the NADP(+) pocket. Residues 124–126, glycine 286, 301–305, and arginine 327 each bind FMN; these read RAS and KPTAT.

The protein belongs to the chorismate synthase family. As to quaternary structure, homotetramer. It depends on FMNH2 as a cofactor.

The catalysed reaction is 5-O-(1-carboxyvinyl)-3-phosphoshikimate = chorismate + phosphate. It participates in metabolic intermediate biosynthesis; chorismate biosynthesis; chorismate from D-erythrose 4-phosphate and phosphoenolpyruvate: step 7/7. Catalyzes the anti-1,4-elimination of the C-3 phosphate and the C-6 proR hydrogen from 5-enolpyruvylshikimate-3-phosphate (EPSP) to yield chorismate, which is the branch point compound that serves as the starting substrate for the three terminal pathways of aromatic amino acid biosynthesis. This reaction introduces a second double bond into the aromatic ring system. This is Chorismate synthase from Synechococcus sp. (strain WH7803).